The following is a 445-amino-acid chain: Allantoinase (445 aa).

Residues His-63, His-65, Lys-150, His-186, His-238, and Asp-311 each coordinate Zn(2+). At Lys-150 the chain carries N6-carboxylysine.

Belongs to the metallo-dependent hydrolases superfamily. Allantoinase family. In terms of assembly, homotetramer. It depends on Zn(2+) as a cofactor. Carboxylation allows a single lysine to coordinate two zinc ions.

It carries out the reaction (S)-allantoin + H2O = allantoate + H(+). It functions in the pathway nitrogen metabolism; (S)-allantoin degradation; allantoate from (S)-allantoin: step 1/1. In terms of biological role, catalyzes the conversion of allantoin (5-ureidohydantoin) to allantoic acid by hydrolytic cleavage of the five-member hydantoin ring. The protein is Allantoinase of Streptomyces avermitilis (strain ATCC 31267 / DSM 46492 / JCM 5070 / NBRC 14893 / NCIMB 12804 / NRRL 8165 / MA-4680).